A 494-amino-acid chain; its full sequence is Ankyrin repeat domain-containing protein 33B (494 aa).

Residues 1–80 form a disordered region; it reads MVLLAGTGPE…SAESVPEGVP (80 aa). A compositionally biased stretch (acidic residues) spans 30 to 42; sequence VEEDPADYEEFED. ANK repeat units follow at residues 84-113, 120-150, 154-183, 189-218, and 223-255; these read PETA…SVEE, NGRT…DVNW, EGNT…GLDL, FGFT…DVHA, and RGMS…PEQF. The segment at 349 to 494 is disordered; the sequence is RAARGPQAQE…RRTAPWKKRT (146 aa). Positions 371–382 are enriched in basic and acidic residues; that stretch reads TGQEDADSREGS. Phosphoserine is present on serine 405. 2 stretches are compositionally biased toward basic and acidic residues: residues 440–451 and 459–487; these read RPARKGSTKDSG and RYKE…ERRT. The stretch at 459–488 forms a coiled coil; the sequence is RYKEAKEEKRKAEEAEKKRQAEAQKERRTA.

This chain is Ankyrin repeat domain-containing protein 33B (ANKRD33B), found in Homo sapiens (Human).